A 258-amino-acid polypeptide reads, in one-letter code: Intron-associated endonuclease 2 (258 aa).

The GIY-YIG domain maps to serine 14–leucine 96.

Functionally, this endonuclease is specific to the nrdD gene splice junction and is involved in intron homing. This Escherichia coli (Bacteriophage T4) protein is Intron-associated endonuclease 2 (ITEVIIR).